A 144-amino-acid chain; its full sequence is Glycophorin-A (144 aa).

Over residues 1 to 25 the composition is skewed to polar residues; it reads SSTTVPATHTSSSSLGPEQYVSSQS. Residues 1–55 form a disordered region; the sequence is SSTTVPATHTSSSSLGPEQYVSSQSNDKHTSDSHPTPTSAHEVTTEFSGRTHYPP. S2 is a glycosylation site (O-linked (GalNAc...) serine). O-linked (GalNAc...) threonine glycans are attached at residues T3, T4, T8, and T10. O-linked (GalNAc...) serine glycans are attached at residues S11, S12, S13, S14, S22, and S23. T30, T36, T38, T44, and T45 each carry an O-linked (GalNAc...) threonine glycan. Residues 33 to 48 are compositionally biased toward polar residues; that stretch reads SHPTPTSAHEVTTEFS. Residue S48 is glycosylated (O-linked (GalNAc...) serine). A glycan (O-linked (GalNAc...) threonine) is linked at T51. Residues 70–92 form a helical membrane-spanning segment; sequence LVIALIIFGVMAGVIGTILFISY. A disordered region spans residues 101–144; it reads SESDVQPLPPPDAEVPLSSVEIEDPEETDELNSFTKPNQERNES. S118 carries the phosphoserine modification. Over residues 121–130 the composition is skewed to acidic residues; the sequence is EIEDPEETDE.

This sequence belongs to the glycophorin-A family. As to quaternary structure, homodimer. Component of the ankyrin-1 complex in the erythrocyte, composed of ANK1, RHCE, RHAG, SLC4A1, EPB42, GYPA, GYPB and AQP1. Interacts with SLC4A1; a GYPA monomer is bound at each end of the SLC4A1 dimer forming a heterotetramer.

It is found in the membrane. Component of the ankyrin-1 complex, a multiprotein complex involved in the stability and shape of the erythrocyte membrane. Glycophorin A is the major intrinsic membrane protein of the erythrocyte. The N-terminal glycosylated segment, which lies outside the erythrocyte membrane, has MN blood group receptors. Appears to be important for the function of SLC4A1 and is required for high activity of SLC4A1. May be involved in translocation of SLC4A1 to the plasma membrane. This chain is Glycophorin-A, found in Macaca fuscata fuscata (Japanese macaque).